Consider the following 275-residue polypeptide: MTRIESTFETLKAQNKKALIPYVMAGDPSPNSFVDLLHDLVKHGADMIEVGLPFSDPMADGPTVALAGERALAGGTSTHQALAIVKKFREQDSSTPIILMGYLNPIEIIGYEAFIALCHESGVDGVLVVDLPPAESGNFVERLAAHDINKIFLLSPTTLPERRKQVMTHCGGYIYYVSLKGVTGSASLDTQAVGEQVQAIKQETNLPICVGFGIRDGQSAAAIGQYADGVIVGSELVKNFSGLSHTSRAEDIATAQASIMTKMDELRQALDALSA.

Active-site proton acceptor residues include Glu-49 and Asp-60.

It belongs to the TrpA family. Tetramer of two alpha and two beta chains.

It catalyses the reaction (1S,2R)-1-C-(indol-3-yl)glycerol 3-phosphate + L-serine = D-glyceraldehyde 3-phosphate + L-tryptophan + H2O. The protein operates within amino-acid biosynthesis; L-tryptophan biosynthesis; L-tryptophan from chorismate: step 5/5. Its function is as follows. The alpha subunit is responsible for the aldol cleavage of indoleglycerol phosphate to indole and glyceraldehyde 3-phosphate. In Psychrobacter sp. (strain PRwf-1), this protein is Tryptophan synthase alpha chain.